Reading from the N-terminus, the 630-residue chain is WD repeat-containing protein 26 homolog (630 aa).

The segment covering 1 to 13 (MQSTSSTSSGSCS) has biased composition (low complexity). Residues 1–90 (MQSTSSTSSG…NNRENTSCSG (90 aa)) are disordered. 2 positions are modified to phosphoserine: S36 and S40. Composition is skewed to polar residues over residues 48–57 (PSGSSAATNG) and 66–75 (IVNNNGSSSR). Residues 96–128 (SNQEIIRLIGQYLHDVGLDKSVQTLMLESGCYL) enclose the LisH domain. Residues 129 to 190 (EHPSATKFRE…EHLDDGNPLD (62 aa)) form the CTLH domain. 7 WD repeats span residues 312 to 351 (DHCD…LTLK), 359 to 400 (QAQL…LVVK), 404 to 443 (SLED…VDSW), 445 to 482 (GVRV…SDFD), 485 to 524 (REPH…LVRR), 529 to 569 (RQSN…PLAK), and 572 to 612 (GHTK…SSAT). Residues 604-630 (PKPNGSSATTESDDCSSSSSSSSWNMT) are disordered. Low complexity predominate over residues 609–630 (SSATTESDDCSSSSSSSSWNMT).

It is found in the cytoplasm. The protein resides in the mitochondrion. G-beta-like protein involved in cell signal transduction. The chain is WD repeat-containing protein 26 homolog from Drosophila melanogaster (Fruit fly).